The primary structure comprises 2269 residues: Anaphase-promoting complex subunit 1 (2269 aa).

5 disordered regions span residues 305-334 (PSSNAENDNTNNNNNNNNTNTNISNNQTIN), 379-433 (SSPP…QENS), 609-644 (NNNNNNNNNNNNNNNNNNNNNNNNNNNNNNNKRKPL), 804-845 (KVYP…NNNN), and 1136-1197 (STAS…NSTS). Low complexity-rich tracts occupy residues 306 to 334 (SSNAENDNTNNNNNNNNTNTNISNNQTIN), 379 to 430 (SSPP…QQQQ), 609 to 638 (NNNNNNNNNNNNNNNNNNNNNNNNNNNNNN), 809 to 845 (NNNNNNNNNNNNNNNNNNNNNNNNNNNNNNNNNNNNN), and 1136 to 1159 (STASSSSNEMNSNSNITSINGQSN). Residues 1160–1177 (GLPMNSTTNQMNSHQINN) are compositionally biased toward polar residues. PC repeat units lie at residues 1440-1472 (AALMGIGLLYCQTSNRRMTEVLLMEIGRKPIND) and 1483-1520 (TAGMALGLVNLGKGANEGSLTDLHVEDRLRSFIGISKE). The segment at 1535–1586 (STPSISSNRNNNDLFNNGSNNNSSSNGGGGGGGGNNNGNNSNNGNNGSSQFK) is disordered. Positions 1540 to 1559 (SSNRNNNDLFNNGSNNNSSS) are enriched in low complexity. The span at 1560–1570 (NGGGGGGGGNN) shows a compositional bias: gly residues. Positions 1571–1583 (NGNNSNNGNNGSS) are enriched in low complexity. 3 PC repeats span residues 1605 to 1637 (GAIIALSLIYLKTNNLKISNYLSIPDTTFGLNY), 1722 to 1756 (GAAFSIGLKYAGSLNENAFSLLMDLIQLFRKRQVY), and 1792 to 1807 (LVMAGSGNLETLKILR). Positions 1960–1993 (NNNNNNNNNNNNNNNNNNNNNNNNNNNNNNNNNN) are enriched in low complexity. The interval 1960–1997 (NNNNNNNNNNNNNNNNNNNNNNNNNNNNNNNNNNKNIL) is disordered.

It belongs to the APC1 family. In terms of assembly, the APC/C is composed of at least 13 subunits that stay tightly associated throughout the cell cycle: anapc1, anapc2, anapc3, anapc4, anapc5, anapc6, anapc7, anapc8, anapc10, anapc11, cdc20, cdc26 and cdh1.

The protein resides in the nucleus. The protein operates within protein modification; protein ubiquitination. In terms of biological role, component of the anaphase promoting complex/cyclosome (APC/C), a cell cycle-regulated E3 ubiquitin-protein ligase complex that controls progression through mitosis and the G1 phase of the cell cycle. This chain is Anaphase-promoting complex subunit 1 (anapc1), found in Dictyostelium discoideum (Social amoeba).